Consider the following 160-residue polypeptide: MGVFTYESEFTSEIPPPRLFKAFVLDADNLVPKIAPQAIKHSEILEGDGGPGTIKKITFGEGSQYGYVKHKIDSIDKENYSYSYTLIEGDALGDTLEKISYETKLVASPSGGSIIKSTSHYHTKGNVEIKEEHVKAGKEKASNLFKLIETYLKGHPDAYN.

This sequence belongs to the BetVI family.

The chain is Major allergen Pru av 1 (PRUA1) from Prunus avium (Cherry).